The following is a 91-amino-acid chain: Acylphosphatase (91 aa).

The Acylphosphatase-like domain maps to 6-91 (CMRCYISGRV…WEDYISFDVL (86 aa)). Active-site residues include arginine 21 and asparagine 39.

This sequence belongs to the acylphosphatase family.

The catalysed reaction is an acyl phosphate + H2O = a carboxylate + phosphate + H(+). In Legionella pneumophila subsp. pneumophila (strain Philadelphia 1 / ATCC 33152 / DSM 7513), this protein is Acylphosphatase (acyP).